We begin with the raw amino-acid sequence, 433 residues long: Adenylosuccinate synthetase (433 aa).

GTP is bound by residues 18–24 (GDEGKGK) and 46–48 (GHT). Aspartate 19 acts as the Proton acceptor in catalysis. Positions 19 and 46 each coordinate Mg(2+). Residues 19 to 22 (DEGK), 44 to 47 (NAGH), threonine 136, arginine 150, glutamine 229, threonine 244, and arginine 308 each bind IMP. The active-site Proton donor is histidine 47. 304–310 (VTTKRMR) contacts substrate. GTP contacts are provided by residues arginine 310, 336–338 (KID), and 420–422 (GTG).

This sequence belongs to the adenylosuccinate synthetase family. Homodimer. Mg(2+) serves as cofactor.

It localises to the cytoplasm. It catalyses the reaction IMP + L-aspartate + GTP = N(6)-(1,2-dicarboxyethyl)-AMP + GDP + phosphate + 2 H(+). It participates in purine metabolism; AMP biosynthesis via de novo pathway; AMP from IMP: step 1/2. Its function is as follows. Plays an important role in the de novo pathway and in the salvage pathway of purine nucleotide biosynthesis. Catalyzes the first committed step in the biosynthesis of AMP from IMP. In Schistosoma japonicum (Blood fluke), this protein is Adenylosuccinate synthetase.